Here is a 300-residue protein sequence, read N- to C-terminus: Acetaldehyde dehydrogenase 3 (300 aa).

Residue 11-14 (SGNI) coordinates NAD(+). C126 functions as the Acyl-thioester intermediate in the catalytic mechanism. NAD(+) is bound by residues 157–165 (SAGPGTRAN) and N276.

It belongs to the acetaldehyde dehydrogenase family.

The catalysed reaction is acetaldehyde + NAD(+) + CoA = acetyl-CoA + NADH + H(+). The sequence is that of Acetaldehyde dehydrogenase 3 from Rhodococcus opacus (strain B4).